The primary structure comprises 324 residues: Methionyl-tRNA formyltransferase (324 aa).

114–117 (SLLP) provides a ligand contact to (6S)-5,6,7,8-tetrahydrofolate.

This sequence belongs to the Fmt family.

It catalyses the reaction L-methionyl-tRNA(fMet) + (6R)-10-formyltetrahydrofolate = N-formyl-L-methionyl-tRNA(fMet) + (6S)-5,6,7,8-tetrahydrofolate + H(+). Attaches a formyl group to the free amino group of methionyl-tRNA(fMet). The formyl group appears to play a dual role in the initiator identity of N-formylmethionyl-tRNA by promoting its recognition by IF2 and preventing the misappropriation of this tRNA by the elongation apparatus. In Phocaeicola vulgatus (strain ATCC 8482 / DSM 1447 / JCM 5826 / CCUG 4940 / NBRC 14291 / NCTC 11154) (Bacteroides vulgatus), this protein is Methionyl-tRNA formyltransferase.